Here is a 332-residue protein sequence, read N- to C-terminus: Glycerol-3-phosphate dehydrogenase [NAD(P)+] (332 aa).

NADPH-binding residues include W11, R30, and K108. Sn-glycerol 3-phosphate is bound by residues K108, G137, and S139. A141 is an NADPH binding site. The sn-glycerol 3-phosphate site is built by K192, D245, S255, R256, and N257. The Proton acceptor role is filled by K192. Residue R256 coordinates NADPH. NADPH-binding residues include V280 and E282.

This sequence belongs to the NAD-dependent glycerol-3-phosphate dehydrogenase family.

The protein resides in the cytoplasm. The catalysed reaction is sn-glycerol 3-phosphate + NAD(+) = dihydroxyacetone phosphate + NADH + H(+). It carries out the reaction sn-glycerol 3-phosphate + NADP(+) = dihydroxyacetone phosphate + NADPH + H(+). The protein operates within membrane lipid metabolism; glycerophospholipid metabolism. In terms of biological role, catalyzes the reduction of the glycolytic intermediate dihydroxyacetone phosphate (DHAP) to sn-glycerol 3-phosphate (G3P), the key precursor for phospholipid synthesis. The protein is Glycerol-3-phosphate dehydrogenase [NAD(P)+] of Burkholderia orbicola (strain MC0-3).